A 129-amino-acid chain; its full sequence is Prefoldin subunit 6 (129 aa).

Position 2 is an N-acetylalanine (Ala-2). Lys-21 carries the post-translational modification N6-acetyllysine. Position 66 is an N6-acetyllysine; alternate (Lys-66). Lys-66 participates in a covalent cross-link: Glycyl lysine isopeptide (Lys-Gly) (interchain with G-Cter in SUMO1); alternate. A Glycyl lysine isopeptide (Lys-Gly) (interchain with G-Cter in SUMO2); alternate cross-link involves residue Lys-66.

It belongs to the prefoldin subunit beta family. In terms of assembly, heterohexamer of two PFD-alpha type and four PFD-beta type subunits. Component of the PAQosome complex which is responsible for the biogenesis of several protein complexes and which consists of R2TP complex members RUVBL1, RUVBL2, RPAP3 and PIH1D1, URI complex members PFDN2, PFDN6, PDRG1, UXT and URI1 as well as ASDURF, POLR2E and DNAAF10/WDR92.

Its function is as follows. Binds specifically to cytosolic chaperonin (c-CPN) and transfers target proteins to it. Binds to nascent polypeptide chain and promotes folding in an environment in which there are many competing pathways for nonnative proteins. The chain is Prefoldin subunit 6 (PFDN6) from Canis lupus familiaris (Dog).